The chain runs to 659 residues: Enzymatic polyprotein (659 aa).

Residues 1-180 (MSLRNRTNPN…FLEEGGNHVD (180 aa)) are protease. D34 is a catalytic residue. In terms of domain architecture, Reverse transcriptase spans 252–436 (LELKVIKPSK…EKINFLGLEI (185 aa)).

This sequence belongs to the caulimoviridae enzymatic polyprotein family.

The catalysed reaction is DNA(n) + a 2'-deoxyribonucleoside 5'-triphosphate = DNA(n+1) + diphosphate. Encodes for at least two polypeptides: protease (PR) and reverse transcriptase (RT). The protease processes the polyprotein in cis. Reverse transcriptase is multifunctional enzyme that converts the viral RNA genome into dsDNA in viral cytoplasmic capsids. This enzyme displays a DNA polymerase activity that can copy either DNA or RNA templates, and a ribonuclease H (RNase H) activity that cleaves the RNA strand of RNA-DNA heteroduplexes in a partially processive 3'- to 5'-endonucleasic mode. Neo-synthesized pregenomic RNA (pgRNA) are encapsidated, and reverse-transcribed inside the nucleocapsid. Partial (+)DNA is synthesized from the (-)DNA template and generates the relaxed circular DNA (RC-DNA) genome. After budding and infection, the RC-DNA migrates in the nucleus, and is converted into a plasmid-like covalently closed circular DNA (cccDNA). The polypeptide is Enzymatic polyprotein (Dianthus caryophyllus (Carnation)).